The following is a 446-amino-acid chain: Glycogen synthase (446 aa).

An ADP-alpha-D-glucose-binding site is contributed by Arg-15.

It belongs to the glycosyltransferase 1 family. Bacterial/plant glycogen synthase subfamily.

It carries out the reaction [(1-&gt;4)-alpha-D-glucosyl](n) + ADP-alpha-D-glucose = [(1-&gt;4)-alpha-D-glucosyl](n+1) + ADP + H(+). Its pathway is glycan biosynthesis; glycogen biosynthesis. Functionally, synthesizes alpha-1,4-glucan chains using ADP-glucose. The sequence is that of Glycogen synthase from Deinococcus deserti (strain DSM 17065 / CIP 109153 / LMG 22923 / VCD115).